The following is a 575-amino-acid chain: Preprotein translocase subunit SCY2, chloroplastic (575 aa).

The transit peptide at 1-34 directs the protein to the chloroplast; that stretch reads MNSSQACFFHFSLRPISLSHPSYAFLSKRDPFLC. 10 helical membrane-spanning segments follow: residues 157 to 177, 206 to 226, 251 to 271, 285 to 305, 306 to 326, 346 to 366, 414 to 434, 447 to 467, 509 to 529, and 531 to 551; these read FVTA…LPGF, LSLF…MQVL, IWWL…YTSL, VMMT…LCDT, ISES…ILTG, LPYL…AVVV, TTYL…PFLL, GAPP…FNIF, FWGG…DHYL, and SINQ…GSII.

The protein belongs to the SecY/SEC61-alpha family. Part of a second Sec protein translocation apparatus. Interacts probably with SECA2. As to expression, ubiquitous.

It is found in the plastid. It localises to the chloroplast membrane. Its subcellular location is the amyloplast membrane. The protein resides in the chloroplast thylakoid membrane. Involved in protein export. Probably interacts with other proteins to allow the postimport or conservative sorting pathway for inner membrane proteins in plastids. Central subunit of the protein translocation channel SecYE. Consists of two halves formed by TMs 1-5 and 6-10. These two domains form a lateral gate at the front which open onto the bilayer between TMs 2 and 7, and are clamped together by SecE at the back. The channel is closed by both a pore ring composed of hydrophobic SecY resides and a short helix (helix 2A) on the extracellular side of the membrane which forms a plug. The sequence is that of Preprotein translocase subunit SCY2, chloroplastic (SCY2) from Arabidopsis thaliana (Mouse-ear cress).